We begin with the raw amino-acid sequence, 253 residues long: Ubiquinone biosynthesis O-methyltransferase (253 aa).

S-adenosyl-L-methionine contacts are provided by Arg-41, Gly-72, Asp-93, and Met-136.

Belongs to the methyltransferase superfamily. UbiG/COQ3 family.

The catalysed reaction is a 3-demethylubiquinol + S-adenosyl-L-methionine = a ubiquinol + S-adenosyl-L-homocysteine + H(+). It carries out the reaction a 3-(all-trans-polyprenyl)benzene-1,2-diol + S-adenosyl-L-methionine = a 2-methoxy-6-(all-trans-polyprenyl)phenol + S-adenosyl-L-homocysteine + H(+). It participates in cofactor biosynthesis; ubiquinone biosynthesis. Functionally, O-methyltransferase that catalyzes the 2 O-methylation steps in the ubiquinone biosynthetic pathway. This is Ubiquinone biosynthesis O-methyltransferase from Chelativorans sp. (strain BNC1).